Here is a 158-residue protein sequence, read N- to C-terminus: Transcription elongation factor GreA (158 aa).

A coiled-coil region spans residues 47 to 68 (AEYDAAKEAQGLLEMRIAKLEE).

The protein belongs to the GreA/GreB family.

In terms of biological role, necessary for efficient RNA polymerase transcription elongation past template-encoded arresting sites. The arresting sites in DNA have the property of trapping a certain fraction of elongating RNA polymerases that pass through, resulting in locked ternary complexes. Cleavage of the nascent transcript by cleavage factors such as GreA or GreB allows the resumption of elongation from the new 3'terminus. GreA releases sequences of 2 to 3 nucleotides. This chain is Transcription elongation factor GreA, found in Flavobacterium johnsoniae (strain ATCC 17061 / DSM 2064 / JCM 8514 / BCRC 14874 / CCUG 350202 / NBRC 14942 / NCIMB 11054 / UW101) (Cytophaga johnsonae).